The sequence spans 1302 residues: Vascular endothelial growth factor receptor kdr-like (1302 aa).

The first 28 residues, 1–28 (MTPLKTSVKAFFTLHVLFSCISHGLVEG), serve as a signal peptide directing secretion. The Extracellular portion of the chain corresponds to 29 to 740 (SRLPDPQLLP…GEDGKPNIEV (712 aa)). Ig-like C2-type domains lie at 34–115 (PQLL…HEVS), 143–206 (DPYF…VDNA), 222–318 (KNLA…TKVI), 326–412 (NVTH…ISYK), 419–542 (PKIF…FYVD), 545–636 (PQPF…SALT), and 643–728 (PWLM…AVIT). 2 cysteine pairs are disulfide-bonded: Cys-55-Cys-104 and Cys-150-Cys-199. N-linked (GlcNAc...) asparagine glycosylation is found at Asn-69 and Asn-97. 17 N-linked (GlcNAc...) asparagine glycosylation sites follow: Asn-242, Asn-265, Asn-291, Asn-326, Asn-370, Asn-380, Asn-408, Asn-453, Asn-466, Asn-505, Asn-517, Asn-532, Asn-607, Asn-611, Asn-630, Asn-648, and Asn-655. Cys-243 and Cys-302 are joined by a disulfide. A disulfide bridge links Cys-444 with Cys-524. A disulfide bond links Cys-565 and Cys-618. Cys-664 and Cys-712 are oxidised to a cystine. Residues 741-761 (IILVSTGAAATFLWIMLILFI) form a helical membrane-spanning segment. The Cytoplasmic segment spans residues 762 to 1302 (RKLRKPSSAD…YVVRYSTPPV (541 aa)). The region spanning 809–1139 (LRLGKTLGHG…ELVERLGDLL (331 aa)) is the Protein kinase domain. Residues 815–823 (LGHGAFGKV) and Lys-843 each bind ATP. The active-site Proton acceptor is the Asp-1003. A phosphotyrosine; by autocatalysis mark is found at Tyr-1029, Tyr-1034, and Tyr-1150. 2 disordered regions span residues 1159–1179 (TKAD…PVSL) and 1266–1292 (PLVP…PDYN). Polar residues predominate over residues 1162–1176 (DPSNQSPTEETSTRP).

Belongs to the protein kinase superfamily. Tyr protein kinase family. CSF-1/PDGF receptor subfamily. In terms of assembly, interacts with isoform VEGF165 of vegfaa and isoform VEGF171 of vegfab. In terms of processing, phosphorylated and activated by vegfaa and vegfab. First expressed in embryos between 5- and 7-somites. At 7 somites, expressed in discrete bilateral stripes both anteriorly and posteriorly, and in a transverse ectodermal stripe in the hindbrain. From 7-somites, expression seems to extend caudally from the head, and in both directions in the trunk region, until by 20-somites, expression is detected as a continuous band from the anterior head region to the tailbud. Concurrently, cells expressing kdrl in the mid- and posterior trunk regions converge medially. By 24 hours post-fertilization (hpf), expressed in all the endothelial cells lining the vasculature.

Its subcellular location is the cell membrane. It catalyses the reaction L-tyrosyl-[protein] + ATP = O-phospho-L-tyrosyl-[protein] + ADP + H(+). Its function is as follows. Receptor for VEGF or VEGFC. Has a tyrosine-protein kinase activity. Combinations of multiple VEGF receptors are required for development of different blood vessel types in the embryo. Involved in angiogenesis, specifically in VEGF-induced sprouting of new blood vessels. Particularly involved in artery formation. Does not appear to be required for hematopoiesis. This Danio rerio (Zebrafish) protein is Vascular endothelial growth factor receptor kdr-like (kdrl).